Reading from the N-terminus, the 441-residue chain is Arginine biosynthesis bifunctional protein ArgJ, mitochondrial (441 aa).

Residues T177, K204, T215, E301, N436, and S441 each contribute to the substrate site. Residue T215 is the Nucleophile of the active site.

The protein belongs to the ArgJ family. As to quaternary structure, heterodimer of an alpha and a beta chain. Post-translationally, the alpha and beta chains are autoproteolytically processed from a single precursor protein within the mitochondrion.

The protein localises to the mitochondrion matrix. The catalysed reaction is N(2)-acetyl-L-ornithine + L-glutamate = N-acetyl-L-glutamate + L-ornithine. The enzyme catalyses L-glutamate + acetyl-CoA = N-acetyl-L-glutamate + CoA + H(+). It participates in amino-acid biosynthesis; L-arginine biosynthesis; L-ornithine and N-acetyl-L-glutamate from L-glutamate and N(2)-acetyl-L-ornithine (cyclic): step 1/1. It functions in the pathway amino-acid biosynthesis; L-arginine biosynthesis; N(2)-acetyl-L-ornithine from L-glutamate: step 1/4. Catalyzes two activities which are involved in the cyclic version of arginine biosynthesis: the synthesis of acetylglutamate from glutamate and acetyl-CoA, and of ornithine by transacetylation between acetylornithine and glutamate. This Kluyveromyces lactis (strain ATCC 8585 / CBS 2359 / DSM 70799 / NBRC 1267 / NRRL Y-1140 / WM37) (Yeast) protein is Arginine biosynthesis bifunctional protein ArgJ, mitochondrial.